Here is a 507-residue protein sequence, read N- to C-terminus: Hippocampus abundant transcript-like protein 1 (507 aa).

Residues 1–27 (MSTDGESPEEPRWKAVASPKASTMPEK) are disordered. Residues 1–51 (MSTDGESPEEPRWKAVASPKASTMPEKRGSAQAASGSWLQGFGHPSVYHAA) lie on the Extracellular side of the membrane. A helical transmembrane segment spans residues 52–72 (FVIFLEFFAWGLLTTPMLTVL). At 73-84 (HETFPQHTFLMN) the chain is on the cytoplasmic side. The helical transmembrane segment at 85 to 105 (GLIQGVKGLLSFLSAPLIGAL) threads the bilayer. Over 106 to 113 (SDVWGRKP) the chain is Extracellular. Residues 114–134 (FLLGTVFFTCFPIPLMRINPW) traverse the membrane as a helical segment. Residues 135–136 (WY) are Cytoplasmic-facing. Residues 137–157 (FGMISVSGVFSVTFSVIFAYV) traverse the membrane as a helical segment. The Extracellular segment spans residues 158–170 (ADFTQEHERSTAY). Residues 171–191 (GWVSATFAASLVSSPAIGTYL) form a helical membrane-spanning segment. The Cytoplasmic segment spans residues 192-198 (SANYGDS). A helical transmembrane segment spans residues 199–219 (LVVLVATLVALLDICFILIAV). Topologically, residues 220–257 (PESLSEKIRPASWGAQISWKQADPFASLKKVGKDSTVL) are extracellular. Residues 258-278 (LICITVFLSYLPEAGQYSSFF) traverse the membrane as a helical segment. At 279-283 (LYLRQ) the chain is on the cytoplasmic side. Residues 284–304 (VIGFGSVKIVAFIAMVGILSI) traverse the membrane as a helical segment. Residues 305-323 (VAQTVFLSKLMRSLGNKNT) lie on the Extracellular side of the membrane. The chain crosses the membrane as a helical span at residues 324–344 (VLLGLGFQMLQLAWYGFGSQA). At 345 to 347 (WMM) the chain is on the cytoplasmic side. The helical transmembrane segment at 348-368 (WAAGTVAAMSSITFPAVSALI) threads the bilayer. The Extracellular segment spans residues 369–389 (SRNAESDQQGVAQGIVTGIRG). The helical transmembrane segment at 390–410 (LCNGLGPALYGFIFYMFHVEL) threads the bilayer. Topologically, residues 411 to 430 (SELGPKLNSDDDPLQGAFIP) are cytoplasmic. The helical transmembrane segment at 431-451 (GPPFLFGACIVLMSFLVALFI) threads the bilayer. Residues 452 to 507 (PEYRKTSGVQKHNNSTSGSLSTPPERGSDEDIEPLLQDSSIWELSFEEPGNQCTEL) are Extracellular-facing. The segment covering 459 to 473 (GVQKHNNSTSGSLST) has biased composition (polar residues). Positions 459–483 (GVQKHNNSTSGSLSTPPERGSDEDI) are disordered. Asn-464 and Asn-465 each carry an N-linked (GlcNAc...) asparagine glycan.

The protein belongs to the major facilitator superfamily.

The protein resides in the membrane. The sequence is that of Hippocampus abundant transcript-like protein 1 from Mus musculus (Mouse).